The chain runs to 529 residues: ADP,ATP carrier protein 1 (529 aa).

Helical transmembrane passes span 24 to 44 (LKKV…YTIL), 63 to 83 (IPFI…LIYA), 93 to 113 (ALFY…PLVI), 124 to 144 (DFAD…IAML), 149 to 169 (FAAF…LMFW), 184 to 204 (FYAL…PAIV), 220 to 240 (WGVT…IIAA), 284 to 304 (YMLL…LVEV), 322 to 342 (AFMG…MLFI), 356 to 376 (ALVT…LVIF), 381 to 401 (TGLV…VGAV), and 463 to 483 (ISAM…VWLT). The span at 509–520 (AAEKEASPAAKE) shows a compositional bias: low complexity. The interval 509–529 (AAEKEASPAAKEVSPAIEGVS) is disordered.

The protein belongs to the ADP/ATP translocase tlc family.

The protein resides in the cell membrane. This is ADP,ATP carrier protein 1 (tlcA) from Chlamydia muridarum (strain MoPn / Nigg).